Here is an 899-residue protein sequence, read N- to C-terminus: Nuclear factor NF-kappa-B p100 subunit (899 aa).

2 positions are modified to phosphoserine: S23 and S161. The RHD domain occupies 35-224 (ADGPYLVIVE…QPIHDSKSPG (190 aa)). A Nuclear localization signal motif is present at residues 337-341 (RKRRK). Residues 346–377 (FSQPFGGGSHMGGGSGGSAGGYGGAGGGGSLG) are GRR. Positions 403-434 (GGAQMAGSRRDTDAGEGAEEPRTPPEAPQGEP) are disordered. The segment covering 410–425 (SRRDTDAGEGAEEPRT) has biased composition (basic and acidic residues). T425 is modified (phosphothreonine). ANK repeat units follow at residues 487–516 (NGDT…HAQY), 526–555 (LHQT…DPTL), 559–590 (HGDS…HAVP), 599–628 (EGLY…EVEA), 633–663 (GGRT…NVNA), and 667–696 (AGNT…DIHA). The interval 698 to 734 (NEEPLCPLPSPSTSGSDSDSEGPERDTQRNFRGHTPL) is disordered. S713, S715, and S717 each carry phosphoserine. An ANK 7 repeat occupies 729–755 (RGHTPLDLTCSTKVKTLLLNAAQNTTE). In terms of domain architecture, Death spans 764 to 851 (AGPGLSLGDA…EGVRLLKGPE (88 aa)). A Phosphoserine modification is found at S812. The segment covering 851-865 (ETRDKLPSTEVKEDS) has biased composition (basic and acidic residues). The tract at residues 851–899 (ETRDKLPSTEVKEDSAYGSQSVEQEAEKLCPPPEPPGGLCHGHPQPQVH) is disordered. Residue K855 forms a Glycyl lysine isopeptide (Lys-Gly) (interchain with G-Cter in ubiquitin) linkage. 2 positions are modified to phosphoserine; by MAP3K14: S865 and S869. The span at 887 to 899 (GGLCHGHPQPQVH) shows a compositional bias: low complexity.

Component of the NF-kappa-B RelB-p52 complex. Homodimer; component of the NF-kappa-B p52-p52 complex. Component of the NF-kappa-B p65-p52 complex. Component of the NF-kappa-B p52-c-Rel complex. NFKB2/p52 interacts with NFKBIE. Component of a complex consisting of the NF-kappa-B p50-p50 homodimer and BCL3. Directly interacts with MEN1. While translation occurs, the particular unfolded structure after the GRR repeat promotes the generation of p52 making it an acceptable substrate for the proteasome. This process is known as cotranslational processing. The processed form is active and the unprocessed form acts as an inhibitor (I kappa B-like), being able to form cytosolic complexes with NF-kappa B, trapping it in the cytoplasm. Complete folding of the region downstream of the GRR repeat precludes processing. In terms of processing, subsequent to MAP3K14-dependent serine phosphorylation, p100 polyubiquitination occurs then triggering its proteasome-dependent processing. Post-translationally, constitutive processing is tightly suppressed by its C-terminal processing inhibitory domain, named PID, which contains the death domain. Ubiquitinated by TRIM55; leading to processing by VCP and subsequent ubiquitin-dependent protein degradation by the proteasome. As to expression, highly expressed in lymph nodes and thymus.

The protein localises to the nucleus. The protein resides in the cytoplasm. NF-kappa-B is a pleiotropic transcription factor present in almost all cell types and is the endpoint of a series of signal transduction events that are initiated by a vast array of stimuli related to many biological processes such as inflammation, immunity, differentiation, cell growth, tumorigenesis and apoptosis. NF-kappa-B is a homo- or heterodimeric complex formed by the Rel-like domain-containing proteins RELA/p65, RELB, NFKB1/p105, NFKB1/p50, REL and NFKB2/p52. The dimers bind at kappa-B sites in the DNA of their target genes and the individual dimers have distinct preferences for different kappa-B sites that they can bind with distinguishable affinity and specificity. Different dimer combinations act as transcriptional activators or repressors, respectively. NF-kappa-B is controlled by various mechanisms of post-translational modification and subcellular compartmentalization as well as by interactions with other cofactors or corepressors. NF-kappa-B complexes are held in the cytoplasm in an inactive state complexed with members of the NF-kappa-B inhibitor (I-kappa-B) family. In a conventional activation pathway, I-kappa-B is phosphorylated by I-kappa-B kinases (IKKs) in response to different activators, subsequently degraded thus liberating the active NF-kappa-B complex which translocates to the nucleus. In a non-canonical activation pathway, the MAP3K14-activated CHUK/IKKA homodimer phosphorylates NFKB2/p100 associated with RelB, inducing its proteolytic processing to NFKB2/p52 and the formation of NF-kappa-B RelB-p52 complexes. The NF-kappa-B heterodimeric RelB-p52 complex is a transcriptional activator. The NF-kappa-B p52-p52 homodimer is a transcriptional repressor. NFKB2 appears to have dual functions such as cytoplasmic retention of attached NF-kappa-B proteins by p100 and generation of p52 by a cotranslational processing. The proteasome-mediated process ensures the production of both p52 and p100 and preserves their independent function. p52 binds to the kappa-B consensus sequence 5'-GGRNNYYCC-3', located in the enhancer region of genes involved in immune response and acute phase reactions. p52 and p100 are respectively the minor and major form; the processing of p100 being relatively poor. Isoform p49 is a subunit of the NF-kappa-B protein complex, which stimulates the HIV enhancer in synergy with p65. In concert with RELB, regulates the circadian clock by repressing the transcriptional activator activity of the CLOCK-BMAL1 heterodimer. The chain is Nuclear factor NF-kappa-B p100 subunit (Nfkb2) from Mus musculus (Mouse).